The sequence spans 51 residues: Large ribosomal subunit protein eL39x (51 aa).

This sequence belongs to the eukaryotic ribosomal protein eL39 family.

This Oryza sativa subsp. japonica (Rice) protein is Large ribosomal subunit protein eL39x (RPL39C).